The primary structure comprises 436 residues: Adenylosuccinate synthetase (436 aa).

GTP contacts are provided by residues 21–27 (GDEGKGK) and 49–51 (GHT). The active-site Proton acceptor is the Asp-22. Residues Asp-22 and Gly-49 each contribute to the Mg(2+) site. Residues 22–25 (DEGK), 47–50 (NAGH), Thr-135, Arg-149, Gln-230, Thr-245, and Arg-309 each bind IMP. The Proton donor role is filled by His-50. Residue 305-311 (TTTGRPR) participates in substrate binding. GTP is bound by residues Arg-311, 337-339 (KVD), and 423-425 (SSG).

Belongs to the adenylosuccinate synthetase family. In terms of assembly, homodimer. Requires Mg(2+) as cofactor.

It localises to the cytoplasm. The enzyme catalyses IMP + L-aspartate + GTP = N(6)-(1,2-dicarboxyethyl)-AMP + GDP + phosphate + 2 H(+). The protein operates within purine metabolism; AMP biosynthesis via de novo pathway; AMP from IMP: step 1/2. Its function is as follows. Plays an important role in the de novo pathway of purine nucleotide biosynthesis. Catalyzes the first committed step in the biosynthesis of AMP from IMP. In Thermoplasma volcanium (strain ATCC 51530 / DSM 4299 / JCM 9571 / NBRC 15438 / GSS1), this protein is Adenylosuccinate synthetase.